The primary structure comprises 32 residues: Beta-1,4-galactosyltransferase 1 (32 aa).

Belongs to the glycosyltransferase 7 family. Mn(2+) is required as a cofactor. The soluble form derives from the membrane form by proteolytic processing.

The protein resides in the golgi apparatus. The protein localises to the golgi stack membrane. Its subcellular location is the secreted. It localises to the cell membrane. It is found in the cell projection. The protein resides in the filopodium. The enzyme catalyses D-glucose + UDP-alpha-D-galactose = lactose + UDP + H(+). It catalyses the reaction an N-acetyl-beta-D-glucosaminyl derivative + UDP-alpha-D-galactose = a beta-D-galactosyl-(1-&gt;4)-N-acetyl-beta-D-glucosaminyl derivative + UDP + H(+). It carries out the reaction N-acetyl-D-glucosamine + UDP-alpha-D-galactose = beta-D-galactosyl-(1-&gt;4)-N-acetyl-D-glucosamine + UDP + H(+). The catalysed reaction is a beta-D-GlcNAc-(1-&gt;3)-beta-D-Gal-(1-&gt;4)-beta-D-Glc-(1&lt;-&gt;1)-Cer(d18:1(4E)) + UDP-alpha-D-galactose = a neolactoside nLc4Cer(d18:1(4E)) + UDP + H(+). The enzyme catalyses a beta-D-glucosylceramide + UDP-alpha-D-galactose = a beta-D-galactosyl-(1-&gt;4)-beta-D-glucosyl-(1&lt;-&gt;1)-ceramide + UDP + H(+). It catalyses the reaction a neolactoside IV(3)-beta-GlcNAc-nLc4Cer + UDP-alpha-D-galactose = a neolactoside nLc6Cer + UDP + H(+). It functions in the pathway protein modification; protein glycosylation. Functionally, this protein is responsible for the synthesis of complex-type N-linked oligosaccharides in many glycoproteins as well as the carbohydrate moieties of glycolipids. This Rattus norvegicus (Rat) protein is Beta-1,4-galactosyltransferase 1.